A 138-amino-acid chain; its full sequence is Phosphoribosyl-AMP cyclohydrolase (138 aa).

Residue D85 participates in Mg(2+) binding. C86 serves as a coordination point for Zn(2+). The Mg(2+) site is built by D87 and D89. Positions 102 and 109 each coordinate Zn(2+).

It belongs to the PRA-CH family. In terms of assembly, homodimer. The cofactor is Mg(2+). Zn(2+) is required as a cofactor.

It localises to the cytoplasm. It carries out the reaction 1-(5-phospho-beta-D-ribosyl)-5'-AMP + H2O = 1-(5-phospho-beta-D-ribosyl)-5-[(5-phospho-beta-D-ribosylamino)methylideneamino]imidazole-4-carboxamide. It functions in the pathway amino-acid biosynthesis; L-histidine biosynthesis; L-histidine from 5-phospho-alpha-D-ribose 1-diphosphate: step 3/9. In terms of biological role, catalyzes the hydrolysis of the adenine ring of phosphoribosyl-AMP. The polypeptide is Phosphoribosyl-AMP cyclohydrolase (Methanothermobacter thermautotrophicus (strain ATCC 29096 / DSM 1053 / JCM 10044 / NBRC 100330 / Delta H) (Methanobacterium thermoautotrophicum)).